A 548-amino-acid chain; its full sequence is Flagellin (548 aa).

The protein belongs to the bacterial flagellin family.

Its subcellular location is the secreted. It localises to the bacterial flagellum. In terms of biological role, flagellin is the subunit protein which polymerizes to form the filaments of bacterial flagella. The chain is Flagellin (fliC) from Escherichia coli O127:H6 (strain E2348/69 / EPEC).